The sequence spans 176 residues: Inner membrane-spanning protein YciB (176 aa).

Helical transmembrane passes span 24–44 (TATAVAIVATLVQIAWVAFRH), 49–69 (PMLWVSLGVVTVFGGATLVLH), 76–96 (WKPTVLYWAFSVALIVSQLAF), 119–139 (LSVVWAIFFVLLGLVNLFVAY), and 149–169 (FKLFGATGCLVVFIVGQSLWL).

Belongs to the YciB family.

The protein resides in the cell inner membrane. Plays a role in cell envelope biogenesis, maintenance of cell envelope integrity and membrane homeostasis. This Paraburkholderia phytofirmans (strain DSM 17436 / LMG 22146 / PsJN) (Burkholderia phytofirmans) protein is Inner membrane-spanning protein YciB.